The chain runs to 252 residues: Zinc finger protein 511 (252 aa).

3 C2H2-type zinc fingers span residues 80–105 (FACQVAGCCQVFDALDDYEHHYHTLH), 107–130 (NVCSFCKRAFPSGHLLDAHILEWH), and 144–169 (YQCLVEGCTEKFKTSRDRKDHMVRMH). The segment at 177–221 (FDKPKKSRSPASAEAPGDSGERSEGEAMEICSEPVAASPAPAGER) is disordered. R240 is modified (omega-N-methylarginine).

This sequence belongs to the krueppel C2H2-type zinc-finger protein family.

It localises to the nucleus. Functionally, may be involved in transcriptional regulation. The sequence is that of Zinc finger protein 511 from Homo sapiens (Human).